The primary structure comprises 646 residues: Cartilage acidic protein 1 (646 aa).

The first 28 residues, 1–28 (MAPSADPGMVRMALLLLPPLWLLPLTGG), serve as a signal peptide directing secretion. Residues 47-89 (DYDSNPTQLNYGVAVTDVDHDGDFEIVVAGYTGPNLVLKYNRA) form an FG-GAP 1; atypical repeat. The FG-GAP 2; atypical repeat unit spans residues 106 to 148 (YALRDRQGNAIGVTACDIDGDGREEIYFLNTNNAFSGVATYTD). The FG-GAP 3; atypical repeat unit spans residues 284–334 (AGVDDPHQHGRGVALADFNRDGKVDIVYGNWNGPHRLYLQMSAHGKVRFRD). One copy of the FG-GAP 4; atypical repeat lies at 396-438 (GDALEPEGRGTGGVVTDFDGDGMLDLILSHGESMAQPLSVFRG). One can recognise an EGF-like domain in the interval 560–606 (DTNECIQFPFVCPRDKPVCVNTYGSYRCRTNKRCNRGYEPNEDGTAC). Cystine bridges form between C564-C578, C571-C587, and C593-C606.

It localises to the secreted. It is found in the extracellular space. The protein localises to the extracellular matrix. In Mus musculus (Mouse), this protein is Cartilage acidic protein 1 (Crtac1).